Consider the following 1055-residue polypeptide: MDS1 and EVI1 complex locus protein EVI1-A (1055 aa).

3 consecutive C2H2-type zinc fingers follow at residues 21–48 (YRCE…VTPH), 75–97 (HECK…LLSH), and 103–125 (YKCD…QMSH). The segment at 131-155 (YECENCSKQVFTDPSNLQRHIRSQH) adopts a C2H2-type 4; degenerate zinc-finger fold. C2H2-type zinc fingers lie at residues 161–183 (HACS…KHIH) and 189–211 (FVCE…KRMH). The segment at 218–240 (IKCKDCGQMFSTTSSLNKHRRFC) adopts a C2H2-type 7; atypical zinc-finger fold. Disordered stretches follow at residues 324–345 (PVKG…VNQP), 372–423 (FITE…SDKD), and 531–621 (VPLK…PELP). Positions 332–345 (EQSSKSQSPHVNQP) are enriched in polar residues. Residues 381-392 (RPHEKISDHSES) are compositionally biased toward basic and acidic residues. Positions 399 to 413 (STPSGSDLETTSGSD) are enriched in polar residues. The Nuclear localization signal motif lies at 422 to 435 (KDKLKENGKLYKDK). Residues 531–566 (VPLKIEPESPKETKKVQKGKTESPFDLTTKRKEEKA) show a composition bias toward basic and acidic residues. The short motif at 554–558 (PFDLT) is the CTBP-binding motif 1 element. Polar residues predominate over residues 569 to 583 (NVPSKSGAPTSSNHD). The CTBP-binding motif 2 signature appears at 585–589 (PLDLS). Positions 591–601 (GSRSRAATTKQ) are enriched in polar residues. Over residues 602-621 (TEPRKNHIFNEKKDMDPELP) the composition is skewed to basic and acidic residues. C2H2-type zinc fingers lie at residues 734–756 (YTCR…LRTH), 762–785 (YRCK…RNIH), and 791–813 (FKCH…LKKH). 2 disordered regions span residues 813-837 (HENG…GPIL) and 922-957 (SVDE…EDFK). Polar residues predominate over residues 816-827 (GNLSGTAASSPH). The span at 944–954 (DDEDDDDDEEE) shows a compositional bias: acidic residues.

In terms of assembly, homooligomer. Interacts with ctbp. Expressed dynamically during embryonic development; in the developing pronephros, specific areas of the brain (forebrain, midbrain and hindbrain), and in the majority of the visceral arch, and head mesenchyme derived from neural crest cells. Within the pronephros, expressed in the ventroposterior region of the pronephros anlagen from stage 20 (and is absent from the splanchnic layer that forms the glomus), then expression becomes restricted to the distal tubule and duct by the tadpole stage. In adults, expressed in various tissues including kidney, lung, testis, spleen and stomach.

Its subcellular location is the nucleus. The protein localises to the nucleus speckle. In terms of biological role, transcriptional repressor during pronephros development. Plays a role in regionalization of the pronephros; may promote formation of the distal tubule and duct over formation of the glomus and proximal tubule. The protein is MDS1 and EVI1 complex locus protein EVI1-A (mecom-a) of Xenopus laevis (African clawed frog).